Here is a 424-residue protein sequence, read N- to C-terminus: UDP-N-acetylglucosamine 1-carboxyvinyltransferase (424 aa).

Phosphoenolpyruvate is bound at residue 22–23 (KN). R93 lines the UDP-N-acetyl-alpha-D-glucosamine pocket. Catalysis depends on C117, which acts as the Proton donor. Residue C117 is modified to 2-(S-cysteinyl)pyruvic acid O-phosphothioketal. UDP-N-acetyl-alpha-D-glucosamine contacts are provided by residues 122 to 126 (RPVDL), 162 to 165 (KVSV), D307, and I329.

This sequence belongs to the EPSP synthase family. MurA subfamily.

Its subcellular location is the cytoplasm. The enzyme catalyses phosphoenolpyruvate + UDP-N-acetyl-alpha-D-glucosamine = UDP-N-acetyl-3-O-(1-carboxyvinyl)-alpha-D-glucosamine + phosphate. It participates in cell wall biogenesis; peptidoglycan biosynthesis. Functionally, cell wall formation. Adds enolpyruvyl to UDP-N-acetylglucosamine. In Haemophilus influenzae (strain PittGG), this protein is UDP-N-acetylglucosamine 1-carboxyvinyltransferase.